A 178-amino-acid polypeptide reads, in one-letter code: Matrix-remodeling-associated protein 7 (178 aa).

A helical transmembrane segment spans residues 7–27 (LLAALPALVTALALLLAWLLL). Residues 33–121 (RVPAPESTAS…AFSFKYSPGQ (89 aa)) form a disordered region. A compositionally biased stretch (pro residues) spans 48–65 (APAPPEPPESCAPEPAPE). Residues 76–85 (PEESEAEEPA) are compositionally biased toward acidic residues. Phosphoserine occurs at positions 79 and 165.

It is found in the membrane. This chain is Matrix-remodeling-associated protein 7 (Mxra7), found in Mus musculus (Mouse).